A 947-amino-acid chain; its full sequence is Transcriptional regulator WAR1 (947 aa).

The segment covering 1–10 (MSDTTPEKGS) has biased composition (basic and acidic residues). A disordered region spans residues 1-52 (MSDTTPEKGSVDSVSPSASNGSNTNNPLNNSSPQPLKSNESDKKPKVTRRSV). The span at 19 to 38 (SNGSNTNNPLNNSSPQPLKS) shows a compositional bias: low complexity. Positions 54-86 (CKSCHSLKVKCTPSDPNNPSAPCVRCINANRIC) form a DNA-binding region, zn(2)-C6 fungal-type. Residues 96–222 (RRKKSEILEA…SPTSKDDEIN (127 aa)) are disordered. Residues 129–142 (NSSENYSSSINNAN) show a composition bias toward low complexity. Polar residues-rich tracts occupy residues 143 to 158 (DSSL…TFDP) and 167 to 185 (QASS…QSAA).

Homodimer.

The protein resides in the nucleus. In terms of biological role, transcription factor required for yeast cell adherence to silicone substrate. Plays a role in resistance to weak organic acids such as acetate and sorbate. Binds in vitro to a nitric oxide-responsive element (NORE) but seems not to be involved in response to nitrosative stress. This is Transcriptional regulator WAR1 (WAR1) from Candida albicans (strain SC5314 / ATCC MYA-2876) (Yeast).